Consider the following 310-residue polypeptide: Acetylglutamate kinase (310 aa).

Substrate contacts are provided by residues 76–77 (GG), Arg98, and Asn203.

Belongs to the acetylglutamate kinase family. ArgB subfamily.

The protein resides in the cytoplasm. It carries out the reaction N-acetyl-L-glutamate + ATP = N-acetyl-L-glutamyl 5-phosphate + ADP. The protein operates within amino-acid biosynthesis; L-arginine biosynthesis; N(2)-acetyl-L-ornithine from L-glutamate: step 2/4. Functionally, catalyzes the ATP-dependent phosphorylation of N-acetyl-L-glutamate. This Cutibacterium acnes (strain DSM 16379 / KPA171202) (Propionibacterium acnes) protein is Acetylglutamate kinase.